A 406-amino-acid polypeptide reads, in one-letter code: Testis-specific Y-encoded-like protein 5 (406 aa).

Positions 1–25 are enriched in basic residues; sequence MSGRSRGRKSSRAKGRGKGRARARV. Disordered stretches follow at residues 1–67, 132–164, and 382–406; these read MSGR…PAEL, IGNR…PKMA, and RGEK…RQPN. Residues 27-38 show a composition bias toward basic and acidic residues; that stretch reads AAAEDAWHDEKP. A compositionally biased stretch (low complexity) spans 49 to 62; the sequence is AAAQVQAGAAQGGA. Residues 382 to 392 show a composition bias toward basic and acidic residues; that stretch reads RGEKGKEERPG.

Belongs to the nucleosome assembly protein (NAP) family. In terms of assembly, interacts with USP7.

Its function is as follows. Involved in modulation of cell growth and cellular response to gamma radiation probably via regulation of the Akt signaling pathway. Involved in regulation of p53/TP53. Suppresses p53/TP53 protein levels and promotes its ubiquitination; the function is dependent on USP7 and independent on MDM2. Proposed to displace p53/TP53 from interaction with USP7. The sequence is that of Testis-specific Y-encoded-like protein 5 (Tspyl5) from Mus musculus (Mouse).